A 475-amino-acid polypeptide reads, in one-letter code: Ataxin-10 (475 aa).

Arginine 10 carries the post-translational modification Omega-N-methylarginine. Phosphoserine occurs at positions 12 and 77. Position 82 is a phosphothreonine (threonine 82). Residue serine 430 is modified to Phosphoserine.

It belongs to the ataxin-10 family. As to quaternary structure, homooligomer. Interacts with GNB2. Interacts with IQCB1. Interacts with OGT. Polyubiquitinated. In terms of processing, phosphorylation at Ser-12 by AURKB promotes the association of ATXN10 with PLK1. Phosphorylation at Ser-77 and Thr-82 by PLK1 may play a role in the regulation of cytokinesis and may stimulate the proteasome-mediated degradation of ATXN10. Ubiquitous distribution. Markedly increased expression in testis, adrenals, and brain.

It localises to the cytoplasm. The protein localises to the perinuclear region. Its subcellular location is the midbody. It is found in the cytoskeleton. The protein resides in the cilium basal body. It localises to the microtubule organizing center. The protein localises to the centrosome. Its subcellular location is the centriole. May play a role in the regulation of cytokinesis. May play a role in signaling by stimulating protein glycosylation. Induces neuritogenesis by activating the Ras-MAP kinase pathway and is necessary for the survival of cerebellar neurons. Does not appear to play a major role in ciliogenesis. The polypeptide is Ataxin-10 (Atxn10) (Rattus norvegicus (Rat)).